A 186-amino-acid polypeptide reads, in one-letter code: Protein GrpE (186 aa).

Residues 1–13 (MSENTQPEQNQPL) are compositionally biased toward polar residues. The interval 1 to 22 (MSENTQPEQNQPLTGAPSPEEL) is disordered.

The protein belongs to the GrpE family. Homodimer.

The protein localises to the cytoplasm. Functionally, participates actively in the response to hyperosmotic and heat shock by preventing the aggregation of stress-denatured proteins, in association with DnaK and GrpE. It is the nucleotide exchange factor for DnaK and may function as a thermosensor. Unfolded proteins bind initially to DnaJ; upon interaction with the DnaJ-bound protein, DnaK hydrolyzes its bound ATP, resulting in the formation of a stable complex. GrpE releases ADP from DnaK; ATP binding to DnaK triggers the release of the substrate protein, thus completing the reaction cycle. Several rounds of ATP-dependent interactions between DnaJ, DnaK and GrpE are required for fully efficient folding. The polypeptide is Protein GrpE (Polaromonas sp. (strain JS666 / ATCC BAA-500)).